A 358-amino-acid polypeptide reads, in one-letter code: Myb family transcription factor APL (358 aa).

One can recognise an HTH myb-type domain in the interval 31 to 91 (TDPKPRLRWT…HLQKFRLGKQ (61 aa)). The H-T-H motif DNA-binding region spans 62-87 (PKTIMRVMGVKGLTLYHLKSHLQKFR). The stretch at 125–145 (RNMNEMQMEVQRRLHEQLEVQ) forms a coiled coil. An LHEQLE motif is present at residues 138-143 (LHEQLE). Residues 313–358 (RKSGLSGDEGNNGGKLLERPSPRRSPLSPMMNPNGGLIQGRNSPFG) are disordered.

It belongs to the MYB-CC family. Expressed in shoots and roots, specifically in the developing protophloem sieve elements. Detected in phloem and/or cambium. Expressed in the phloem tissues of various organs, including leaves and cotyledons, during vegetative growth.

It localises to the nucleus. In terms of biological role, transcription factor required for phloem identity. Has a dual role both in promoting phloem differentiation and in repressing xylem differentiation during vascular development. Regulates the expression of the transcription factor NAC045 (AC A4VCM0). May activate the transcription of specific genes involved in phosphate uptake or assimilation. Promotes flowering through transcriptional activation of both FT and its transport machinery component, FTIP1. The protein is Myb family transcription factor APL of Arabidopsis thaliana (Mouse-ear cress).